The following is a 161-amino-acid chain: 2-C-methyl-D-erythritol 2,4-cyclodiphosphate synthase (161 aa).

Residues Asp-8 and His-10 each coordinate a divalent metal cation. 4-CDP-2-C-methyl-D-erythritol 2-phosphate contacts are provided by residues 8 to 10 and 34 to 35; these read DVH and HS. Position 42 (His-42) interacts with a divalent metal cation. 4-CDP-2-C-methyl-D-erythritol 2-phosphate-binding positions include 56-58, 61-65, 100-106, 132-135, and Phe-139; these read DIG, FPDTD, AQSPKMA, and TTEE.

The protein belongs to the IspF family. As to quaternary structure, homotrimer. A divalent metal cation serves as cofactor.

It catalyses the reaction 4-CDP-2-C-methyl-D-erythritol 2-phosphate = 2-C-methyl-D-erythritol 2,4-cyclic diphosphate + CMP. The protein operates within isoprenoid biosynthesis; isopentenyl diphosphate biosynthesis via DXP pathway; isopentenyl diphosphate from 1-deoxy-D-xylulose 5-phosphate: step 4/6. Its function is as follows. Involved in the biosynthesis of isopentenyl diphosphate (IPP) and dimethylallyl diphosphate (DMAPP), two major building blocks of isoprenoid compounds. Catalyzes the conversion of 4-diphosphocytidyl-2-C-methyl-D-erythritol 2-phosphate (CDP-ME2P) to 2-C-methyl-D-erythritol 2,4-cyclodiphosphate (ME-CPP) with a corresponding release of cytidine 5-monophosphate (CMP). In Clostridioides difficile (strain 630) (Peptoclostridium difficile), this protein is 2-C-methyl-D-erythritol 2,4-cyclodiphosphate synthase.